A 300-amino-acid polypeptide reads, in one-letter code: RNA polymerase sigma factor RpoH (300 aa).

A sigma-70 factor domain-2 region spans residues Leu53–Ser122. The Interaction with polymerase core subunit RpoC signature appears at Glu77–Ser80. The interval Ala231–Glu282 is sigma-70 factor domain-4. Residues Leu255 to Val274 constitute a DNA-binding region (H-T-H motif).

Belongs to the sigma-70 factor family. RpoH subfamily. In terms of assembly, interacts with the RNA polymerase core enzyme.

It is found in the cytoplasm. Its function is as follows. Sigma factors are initiation factors that promote the attachment of RNA polymerase to specific initiation sites and are then released. This sigma factor is involved in regulation of expression of heat shock genes. The polypeptide is RNA polymerase sigma factor RpoH (Rhizobium radiobacter (Agrobacterium tumefaciens)).